Reading from the N-terminus, the 87-residue chain is Small ribosomal subunit protein bS18 (87 aa).

The segment covering 1-10 (MAGKSSGDRR) has biased composition (basic and acidic residues). Positions 1 to 23 (MAGKSSGDRRKLLRGAKVGKNAA) are disordered.

The protein belongs to the bacterial ribosomal protein bS18 family. In terms of assembly, part of the 30S ribosomal subunit. Forms a tight heterodimer with protein bS6.

Binds as a heterodimer with protein bS6 to the central domain of the 16S rRNA, where it helps stabilize the platform of the 30S subunit. This chain is Small ribosomal subunit protein bS18, found in Clavibacter sepedonicus (Clavibacter michiganensis subsp. sepedonicus).